Reading from the N-terminus, the 514-residue chain is Adenylosuccinate synthetase 2, chloroplastic (514 aa).

Residues 1 to 56 (MAMAAAAAVASQGLLATSSQQQKKSSAKLICNAATFFSGKRLLWVKSCNNGAVGLR) constitute a chloroplast transit peptide. Residues 100-106 (GDEGKGK) and 128-130 (GHT) each bind GTP. D101 serves as the catalytic Proton acceptor. The Mg(2+) site is built by D101 and G128. IMP-binding positions include 101-104 (DEGK), 126-129 (NAGH), T218, R232, Q312, T327, and R391. The active-site Proton donor is H129. 387–393 (TTTGRPR) is a substrate binding site. GTP is bound by residues R393, 419 to 421 (KLD), and 502 to 504 (GVG).

The protein belongs to the adenylosuccinate synthetase family. As to quaternary structure, homodimer. It depends on Mg(2+) as a cofactor.

It localises to the plastid. The protein localises to the chloroplast. The catalysed reaction is IMP + L-aspartate + GTP = N(6)-(1,2-dicarboxyethyl)-AMP + GDP + phosphate + 2 H(+). Its pathway is purine metabolism; AMP biosynthesis via de novo pathway; AMP from IMP: step 1/2. In terms of biological role, plays an important role in the de novo pathway and in the salvage pathway of purine nucleotide biosynthesis. Catalyzes the first committed step in the biosynthesis of AMP from IMP. This Physcomitrium patens (Spreading-leaved earth moss) protein is Adenylosuccinate synthetase 2, chloroplastic.